Consider the following 407-residue polypeptide: Probable tRNA sulfurtransferase (407 aa).

In terms of domain architecture, THUMP spans 61 to 165 (NEITYRLSKI…LDAIYMYEEV (105 aa)). ATP is bound by residues 183 to 184 (ML), 208 to 209 (HF), arginine 265, glycine 287, and glutamine 296.

This sequence belongs to the ThiI family.

It localises to the cytoplasm. The enzyme catalyses [ThiI sulfur-carrier protein]-S-sulfanyl-L-cysteine + a uridine in tRNA + 2 reduced [2Fe-2S]-[ferredoxin] + ATP + H(+) = [ThiI sulfur-carrier protein]-L-cysteine + a 4-thiouridine in tRNA + 2 oxidized [2Fe-2S]-[ferredoxin] + AMP + diphosphate. It catalyses the reaction [ThiS sulfur-carrier protein]-C-terminal Gly-Gly-AMP + S-sulfanyl-L-cysteinyl-[cysteine desulfurase] + AH2 = [ThiS sulfur-carrier protein]-C-terminal-Gly-aminoethanethioate + L-cysteinyl-[cysteine desulfurase] + A + AMP + 2 H(+). Its pathway is cofactor biosynthesis; thiamine diphosphate biosynthesis. Catalyzes the ATP-dependent transfer of a sulfur to tRNA to produce 4-thiouridine in position 8 of tRNAs, which functions as a near-UV photosensor. Also catalyzes the transfer of sulfur to the sulfur carrier protein ThiS, forming ThiS-thiocarboxylate. This is a step in the synthesis of thiazole, in the thiamine biosynthesis pathway. The sulfur is donated as persulfide by IscS. This is Probable tRNA sulfurtransferase from Staphylococcus aureus (strain MSSA476).